Here is a 504-residue protein sequence, read N- to C-terminus: MTTNNGFDSLHSHAQRLKGASIPGLLAAEPGRVQDLALRVGPLYVNFARQKYDAAALQALLALAADRDVGGAITRLFRGEQVNLTEGRAALHTALRGDVVDAPVAAEAYATAREIRQRMGVLVRALEDSGVTDVVSVGIGGSDLGPRLVADALRPVSGARLRVHFVSNVDGAAMQRTLATLDPAKTAGILISKTFGTQETLLNGQILHDWLGGSDRLYAVSANPERAAKAFAIAADRVLPMWDWVGGRYSLWSAVGFPIALAIGFERFEQLLEGAAQMDAHALDAPLERNLPVLHGLTDIWNRNLLGHATHAVMTYDQRLALLPAYLQQLVMESLGKRVQRDGQPVTTDTVPVWWGGAGTDVQHSFFQALHQGTSIVPADFIGCVHNDDPYTINHQALLANLLAQTEALANGQGSDDPHRDYPGGRPSTLILLDALTPQALGALIAMYEHAVYVQSVIWNINAFDQFGVELGKQLASGLLPALQGEDVAVADPMTREILAQLKG.

The active-site Proton donor is the glutamate 333. Residues histidine 364 and lysine 473 contribute to the active site.

It belongs to the GPI family.

The protein resides in the cytoplasm. It catalyses the reaction alpha-D-glucose 6-phosphate = beta-D-fructose 6-phosphate. It participates in carbohydrate biosynthesis; gluconeogenesis. The protein operates within carbohydrate degradation; glycolysis; D-glyceraldehyde 3-phosphate and glycerone phosphate from D-glucose: step 2/4. In terms of biological role, catalyzes the reversible isomerization of glucose-6-phosphate to fructose-6-phosphate. In Stenotrophomonas maltophilia (strain K279a), this protein is Glucose-6-phosphate isomerase.